The chain runs to 214 residues: Ribosomal RNA small subunit methyltransferase G (214 aa).

S-adenosyl-L-methionine contacts are provided by residues G81, M86, 132–133, and R147; that span reads VE.

It belongs to the methyltransferase superfamily. RNA methyltransferase RsmG family.

The protein localises to the cytoplasm. The catalysed reaction is guanosine(527) in 16S rRNA + S-adenosyl-L-methionine = N(7)-methylguanosine(527) in 16S rRNA + S-adenosyl-L-homocysteine. Functionally, specifically methylates the N7 position of guanine in position 527 of 16S rRNA. The chain is Ribosomal RNA small subunit methyltransferase G from Pseudomonas paraeruginosa (strain DSM 24068 / PA7) (Pseudomonas aeruginosa (strain PA7)).